A 194-amino-acid chain; its full sequence is Orotate phosphoribosyltransferase (194 aa).

Position 117-125 (117-125 (EDIVTTGLS)) interacts with 5-phospho-alpha-D-ribose 1-diphosphate. Orotate is bound by residues threonine 121 and arginine 149.

The protein belongs to the purine/pyrimidine phosphoribosyltransferase family. PyrE subfamily. As to quaternary structure, homodimer. Mg(2+) serves as cofactor.

It carries out the reaction orotidine 5'-phosphate + diphosphate = orotate + 5-phospho-alpha-D-ribose 1-diphosphate. The protein operates within pyrimidine metabolism; UMP biosynthesis via de novo pathway; UMP from orotate: step 1/2. In terms of biological role, catalyzes the transfer of a ribosyl phosphate group from 5-phosphoribose 1-diphosphate to orotate, leading to the formation of orotidine monophosphate (OMP). This is Orotate phosphoribosyltransferase from Parvibaculum lavamentivorans (strain DS-1 / DSM 13023 / NCIMB 13966).